We begin with the raw amino-acid sequence, 330 residues long: PDZ and LIM domain protein 4 (330 aa).

One can recognise a PDZ domain in the interval 1–84; it reads MTHSVTLRGP…HLTLSVSRPE (84 aa). 2 disordered regions span residues 104–153 and 219–242; these read DPES…SNEA and EAGE…ASKL. Phosphoserine occurs at positions 107, 111, 115, 118, 119, 124, and 134. The span at 108–122 shows a compositional bias: polar residues; the sequence is QDCSPATSRRSSVSG. Residues 255 to 305 enclose the LIM zinc-binding domain; sequence CTRCGHGIVGTIVKARDKLYHPECFMCSDCGLNLKQRGYFFLDERLYCENH.

As to quaternary structure, homodimer. Interacts (via C-terminus only or via combined C-terminus and LIM domain, but not LIM domain only) with PTPN13 (via the second or fourth PDZ domains). Found in a complex with PTPN13 and TRIP6. Interacts (via PDZ domain) with ACTN1 and ACTN2 (via C-terminal SDL residues). Interacts (via PDZ domain) with TRIP6 (via the second LIM domain or via the third LIM domain plus C-terminus). Interacts (via LIM domain) with GRIA1 (via C-terminus); this interaction as well as the interaction with alpha-actinin is required for their colocalization in early endosomes. Interacts with PDLIM1. Forms (via LIM domain) a heterodimer with PDLIM3. Interacts directly with SRC (via kinase domain and to a lesser extent the SH2 domain). Phosphorylated on tyrosine residue(s). Can be dephosphorylated by PTPN13. Expressed in several non-muscle tissues including lung, brain, ovary and uterus, and especially in epithelial cells at 14 dpc. In the uterus, high expression in the glandular epithelium, but absent in the simple columnar epithelium lining the uterus cavity.

The protein resides in the cytoplasm. Its subcellular location is the cytoskeleton. It is found in the cell projection. The protein localises to the dendritic spine. It localises to the early endosome membrane. The protein resides in the recycling endosome membrane. Its subcellular location is the nucleus. It is found in the perinuclear region. The protein localises to the lamellipodium. It localises to the synapse. The protein resides in the synaptosome. Its function is as follows. Suppresses SRC activation by recognizing and binding to active SRC and facilitating PTPN13-mediated dephosphorylation of SRC 'Tyr-419' leading to its inactivation. Inactivated SRC dissociates from this protein allowing the initiation of a new SRC inactivation cycle. Involved in reorganization of the actin cytoskeleton. In nonmuscle cells, binds to ACTN1 (alpha-actinin-1), increases the affinity of ACTN1 to F-actin (filamentous actin), and promotes formation of actin stress fibers. Involved in regulation of the synaptic AMPA receptor transport in dendritic spines of hippocampal pyramidal neurons directing the receptors toward an insertion at the postsynaptic membrane. Links endosomal surface-internalized GRIA1-containing AMPA receptors to the alpha-actinin/actin cytoskeleton. Increases AMPA receptor-mediated excitatory postsynaptic currents in neurons. In Mus musculus (Mouse), this protein is PDZ and LIM domain protein 4 (Pdlim4).